Consider the following 263-residue polypeptide: 4-hydroxy-tetrahydrodipicolinate reductase (263 aa).

NAD(+) is bound by residues 8–13, D34, 97–99, and 123–126; these read GACGKM, GTT, and APNF. The Proton donor/acceptor role is filled by H153. H154 provides a ligand contact to (S)-2,3,4,5-tetrahydrodipicolinate. K157 serves as the catalytic Proton donor. Position 163–164 (163–164) interacts with (S)-2,3,4,5-tetrahydrodipicolinate; that stretch reads GT.

Belongs to the DapB family.

The protein resides in the cytoplasm. The catalysed reaction is (S)-2,3,4,5-tetrahydrodipicolinate + NAD(+) + H2O = (2S,4S)-4-hydroxy-2,3,4,5-tetrahydrodipicolinate + NADH + H(+). It catalyses the reaction (S)-2,3,4,5-tetrahydrodipicolinate + NADP(+) + H2O = (2S,4S)-4-hydroxy-2,3,4,5-tetrahydrodipicolinate + NADPH + H(+). The protein operates within amino-acid biosynthesis; L-lysine biosynthesis via DAP pathway; (S)-tetrahydrodipicolinate from L-aspartate: step 4/4. In terms of biological role, catalyzes the conversion of 4-hydroxy-tetrahydrodipicolinate (HTPA) to tetrahydrodipicolinate. This is 4-hydroxy-tetrahydrodipicolinate reductase from Carboxydothermus hydrogenoformans (strain ATCC BAA-161 / DSM 6008 / Z-2901).